Reading from the N-terminus, the 334-residue chain is GTP 3',8-cyclase (334 aa).

The region spanning Gly-11–Pro-235 is the Radical SAM core domain. Arg-20 serves as a coordination point for GTP. [4Fe-4S] cluster-binding residues include Cys-27 and Cys-31. Tyr-33 contacts S-adenosyl-L-methionine. Residue Cys-34 coordinates [4Fe-4S] cluster. Arg-69 lines the GTP pocket. Gly-73 lines the S-adenosyl-L-methionine pocket. Thr-100 lines the GTP pocket. S-adenosyl-L-methionine is bound at residue Ser-124. Lys-161 is a GTP binding site. Met-195 serves as a coordination point for S-adenosyl-L-methionine. Positions 260 and 263 each coordinate [4Fe-4S] cluster. GTP is bound at residue Arg-265–Arg-267. Residue Cys-277 participates in [4Fe-4S] cluster binding.

This sequence belongs to the radical SAM superfamily. MoaA family. Monomer and homodimer. [4Fe-4S] cluster serves as cofactor.

It carries out the reaction GTP + AH2 + S-adenosyl-L-methionine = (8S)-3',8-cyclo-7,8-dihydroguanosine 5'-triphosphate + 5'-deoxyadenosine + L-methionine + A + H(+). The protein operates within cofactor biosynthesis; molybdopterin biosynthesis. Functionally, catalyzes the cyclization of GTP to (8S)-3',8-cyclo-7,8-dihydroguanosine 5'-triphosphate. This Pseudomonas entomophila (strain L48) protein is GTP 3',8-cyclase.